The following is a 226-amino-acid chain: MSLSNSLGLLGRKVGMMRLFTDDGDAVPVTVVDVSNNRVTQIKSQETDGYVALQVTFGSRKASRVTKPQAGHLAKAGVEAGEIIREFRVTADTAGQHKAGAVIAASSVFSVGQKVDVQGTSIGKGYAGTIKRHNMSSQRASHGNSRSHNVPGSIGMAQDPGRVFPGKRMTGHLGDVTKTTQNLDVFRIDEARQLLLIKGAIPGSKGGFVTVRPAIKAKPQAAEGAK.

Residues 135 to 150 (MSSQRASHGNSRSHNV) are compositionally biased toward polar residues. The disordered stretch occupies residues 135–158 (MSSQRASHGNSRSHNVPGSIGMAQ). Position 158 is an N5-methylglutamine (Q158).

This sequence belongs to the universal ribosomal protein uL3 family. Part of the 50S ribosomal subunit. Forms a cluster with proteins L14 and L19. Methylated by PrmB.

One of the primary rRNA binding proteins, it binds directly near the 3'-end of the 23S rRNA, where it nucleates assembly of the 50S subunit. This Variovorax paradoxus (strain S110) protein is Large ribosomal subunit protein uL3.